Consider the following 331-residue polypeptide: Cathepsin S (331 aa).

The first 16 residues, 1-16 (MKRLVCVLLVCSSAVA), serve as a signal peptide directing secretion. Positions 17 to 114 (QLHKDPTLDH…ITYKSNPNRI (98 aa)) are cleaved as a propeptide — activation peptide. An N-linked (GlcNAc...) asparagine glycan is attached at Asn104. 4 disulfides stabilise this stretch: Cys126-Cys224, Cys136-Cys180, Cys170-Cys213, and Cys272-Cys320. Cys139 is an active-site residue. Catalysis depends on residues His278 and Asn298.

Belongs to the peptidase C1 family. As to quaternary structure, monomer.

The protein localises to the lysosome. It is found in the secreted. The protein resides in the cytoplasmic vesicle. It localises to the phagosome. The catalysed reaction is Similar to cathepsin L, but with much less activity on Z-Phe-Arg-|-NHMec, and more activity on the Z-Val-Val-Arg-|-Xaa compound.. Its function is as follows. Thiol protease. Key protease responsible for the removal of the invariant chain from MHC class II molecules and MHC class II antigen presentation. The bond-specificity of this proteinase is in part similar to the specificities of cathepsin L. This is Cathepsin S (CTSS) from Homo sapiens (Human).